The chain runs to 576 residues: Sulfite reductase [NADPH] hemoprotein beta-component (576 aa).

[4Fe-4S] cluster contacts are provided by Cys439, Cys445, Cys485, and Cys489. Siroheme is bound at residue Cys489.

The protein belongs to the nitrite and sulfite reductase 4Fe-4S domain family. As to quaternary structure, alpha(8)-beta(8). The alpha component is a flavoprotein, the beta component is a hemoprotein. It depends on siroheme as a cofactor. [4Fe-4S] cluster is required as a cofactor.

The catalysed reaction is hydrogen sulfide + 3 NADP(+) + 3 H2O = sulfite + 3 NADPH + 4 H(+). It functions in the pathway sulfur metabolism; hydrogen sulfide biosynthesis; hydrogen sulfide from sulfite (NADPH route): step 1/1. Its function is as follows. Component of the sulfite reductase complex that catalyzes the 6-electron reduction of sulfite to sulfide. This is one of several activities required for the biosynthesis of L-cysteine from sulfate. In Aliivibrio fischeri (strain ATCC 700601 / ES114) (Vibrio fischeri), this protein is Sulfite reductase [NADPH] hemoprotein beta-component.